Reading from the N-terminus, the 352-residue chain is Ion-translocating oxidoreductase complex subunit D (352 aa).

The next 4 membrane-spanning stretches (helical) occupy residues 20–40 (IMLL…WFFG), 42–62 (GTLF…AIVL), 69–91 (VASH…SIPP), and 123–143 (PAMI…TSWL). The residue at position 187 (Thr-187) is an FMN phosphoryl threonine. Helical transmembrane passes span 215 to 235 (LAGV…VFLL), 242 to 262 (WHIP…GWLF), 267 to 287 (LASP…FFIL), 301 to 321 (LIFG…GGYP), and 322 to 342 (DGVA…DYYT).

Belongs to the NqrB/RnfD family. As to quaternary structure, the complex is composed of six subunits: RsxA, RsxB, RsxC, RsxD, RsxE and RsxG. Requires FMN as cofactor.

Its subcellular location is the cell inner membrane. Its function is as follows. Part of a membrane-bound complex that couples electron transfer with translocation of ions across the membrane. Required to maintain the reduced state of SoxR. The chain is Ion-translocating oxidoreductase complex subunit D from Salmonella dublin (strain CT_02021853).